We begin with the raw amino-acid sequence, 45 residues long: Movement protein P3a (45 aa).

The helical transmembrane segment at 9-29 (FALGFSSAIPFSVAGLYFVYL) threads the bilayer.

It belongs to the polerovirus movement protein P3a family. Homodimer. Heterodimer with movement protein P17.

Its subcellular location is the host cell junction. The protein resides in the host plasmodesma. The protein localises to the host Golgi apparatus. It localises to the host chloroplast envelope. It is found in the host mitochondrion outer membrane. Functionally, together with movement protein P17, plays an essential role in virus long distance movement. In Solanum tuberosum (Potato), this protein is Movement protein P3a (ORF3a).